The primary structure comprises 91 residues: MRWPLIVLAVLVIVLQYPLWLGKGGWLRVWDVDRQLQAQRETNQRLEQRNAGLEAEVRDLKSGNEAVEERARFELGLTKPDEIFVHTPRKP.

The Cytoplasmic segment spans residues 1–3 (MRW). Residues 4-21 (PLIVLAVLVIVLQYPLWL) traverse the membrane as a helical segment. Residues 22-91 (GKGGWLRVWD…EIFVHTPRKP (70 aa)) lie on the Periplasmic side of the membrane. A coiled-coil region spans residues 28 to 74 (RVWDVDRQLQAQRETNQRLEQRNAGLEAEVRDLKSGNEAVEERARFE).

The protein belongs to the FtsB family. Part of a complex composed of FtsB, FtsL and FtsQ.

It is found in the cell inner membrane. Its function is as follows. Essential cell division protein. May link together the upstream cell division proteins, which are predominantly cytoplasmic, with the downstream cell division proteins, which are predominantly periplasmic. The sequence is that of Cell division protein FtsB from Aromatoleum aromaticum (strain DSM 19018 / LMG 30748 / EbN1) (Azoarcus sp. (strain EbN1)).